The chain runs to 156 residues: Small ribosomal subunit protein uS7 (156 aa).

It belongs to the universal ribosomal protein uS7 family. In terms of assembly, part of the 30S ribosomal subunit. Contacts proteins S9 and S11.

In terms of biological role, one of the primary rRNA binding proteins, it binds directly to 16S rRNA where it nucleates assembly of the head domain of the 30S subunit. Is located at the subunit interface close to the decoding center, probably blocks exit of the E-site tRNA. This Leifsonia xyli subsp. xyli (strain CTCB07) protein is Small ribosomal subunit protein uS7.